We begin with the raw amino-acid sequence, 74 residues long: Sec-independent protein translocase protein TatA (74 aa).

A helical transmembrane segment spans residues methionine 1–glycine 21. The interval alanine 51 to alanine 74 is disordered.

It belongs to the TatA/E family. In terms of assembly, the Tat system comprises two distinct complexes: a TatABC complex, containing multiple copies of TatA, TatB and TatC subunits, and a separate TatA complex, containing only TatA subunits. Substrates initially bind to the TatABC complex, which probably triggers association of the separate TatA complex to form the active translocon.

The protein localises to the cell inner membrane. In terms of biological role, part of the twin-arginine translocation (Tat) system that transports large folded proteins containing a characteristic twin-arginine motif in their signal peptide across membranes. TatA could form the protein-conducting channel of the Tat system. The chain is Sec-independent protein translocase protein TatA from Glaesserella parasuis serovar 5 (strain SH0165) (Haemophilus parasuis).